Reading from the N-terminus, the 1178-residue chain is DNA-directed RNA polymerase subunit beta (1178 aa).

This sequence belongs to the RNA polymerase beta chain family. As to quaternary structure, the RNAP catalytic core consists of 2 alpha, 1 beta, 1 beta' and 1 omega subunit. When a sigma factor is associated with the core the holoenzyme is formed, which can initiate transcription.

It carries out the reaction RNA(n) + a ribonucleoside 5'-triphosphate = RNA(n+1) + diphosphate. In terms of biological role, DNA-dependent RNA polymerase catalyzes the transcription of DNA into RNA using the four ribonucleoside triphosphates as substrates. The polypeptide is DNA-directed RNA polymerase subunit beta (Treponema pallidum (strain Nichols)).